A 257-amino-acid polypeptide reads, in one-letter code: 1-(5-phosphoribosyl)-5-[(5-phosphoribosylamino)methylideneamino] imidazole-4-carboxamide isomerase (257 aa).

Asp8 (proton acceptor) is an active-site residue. Asp129 (proton donor) is an active-site residue.

This sequence belongs to the HisA/HisF family.

The protein resides in the cytoplasm. The enzyme catalyses 1-(5-phospho-beta-D-ribosyl)-5-[(5-phospho-beta-D-ribosylamino)methylideneamino]imidazole-4-carboxamide = 5-[(5-phospho-1-deoxy-D-ribulos-1-ylimino)methylamino]-1-(5-phospho-beta-D-ribosyl)imidazole-4-carboxamide. It participates in amino-acid biosynthesis; L-histidine biosynthesis; L-histidine from 5-phospho-alpha-D-ribose 1-diphosphate: step 4/9. The protein is 1-(5-phosphoribosyl)-5-[(5-phosphoribosylamino)methylideneamino] imidazole-4-carboxamide isomerase of Nostoc punctiforme (strain ATCC 29133 / PCC 73102).